A 148-amino-acid polypeptide reads, in one-letter code: Protein J1 homolog (148 aa).

It belongs to the chordopoxvirinae J1 family. In terms of assembly, homodimer. Part of a complex composed of A30, G7, F10 kinase, A15, D2, D3, and J1. Interacts with A45.

It is found in the virion. The protein resides in the host cytoplasm. In terms of biological role, late protein which is a part of a large complex required for early virion morphogenesis. This complex participates in the formation of virosomes and the incorporation of virosomal contents into nascent immature virions. J1 protein is required for DNA packaging during immature virions (IV) formation. The polypeptide is Protein J1 homolog (Fowlpox virus (strain NVSL) (FPV)).